The primary structure comprises 539 residues: Glucose-6-phosphate isomerase (539 aa).

The active-site Proton donor is the E353. Residues H384 and K505 contribute to the active site.

It belongs to the GPI family.

The protein resides in the cytoplasm. It catalyses the reaction alpha-D-glucose 6-phosphate = beta-D-fructose 6-phosphate. It participates in carbohydrate biosynthesis; gluconeogenesis. It functions in the pathway carbohydrate degradation; glycolysis; D-glyceraldehyde 3-phosphate and glycerone phosphate from D-glucose: step 2/4. Its function is as follows. Catalyzes the reversible isomerization of glucose-6-phosphate to fructose-6-phosphate. The protein is Glucose-6-phosphate isomerase of Ralstonia pickettii (strain 12J).